Reading from the N-terminus, the 267-residue chain is Thiazole synthase (267 aa).

K110 (schiff-base intermediate with DXP) is an active-site residue. Residues G171, 197–198 (AG), and 219–220 (NT) contribute to the 1-deoxy-D-xylulose 5-phosphate site.

It belongs to the ThiG family. Homotetramer. Forms heterodimers with either ThiH or ThiS.

The protein localises to the cytoplasm. The enzyme catalyses [ThiS sulfur-carrier protein]-C-terminal-Gly-aminoethanethioate + 2-iminoacetate + 1-deoxy-D-xylulose 5-phosphate = [ThiS sulfur-carrier protein]-C-terminal Gly-Gly + 2-[(2R,5Z)-2-carboxy-4-methylthiazol-5(2H)-ylidene]ethyl phosphate + 2 H2O + H(+). Its pathway is cofactor biosynthesis; thiamine diphosphate biosynthesis. Functionally, catalyzes the rearrangement of 1-deoxy-D-xylulose 5-phosphate (DXP) to produce the thiazole phosphate moiety of thiamine. Sulfur is provided by the thiocarboxylate moiety of the carrier protein ThiS. In vitro, sulfur can be provided by H(2)S. The polypeptide is Thiazole synthase (Maricaulis maris (strain MCS10) (Caulobacter maris)).